The primary structure comprises 106 residues: MKNDIAIMADPDTVTGFMLGGIKSGFPVHNKEEAKTTLKQLVDDEYSIIITTEKIGDELRDDITKYTGSKALPMIIEVPDKSGSHKRETDPMNDLIKRVIGVEMVK.

This sequence belongs to the V-ATPase F subunit family. As to quaternary structure, has multiple subunits with at least A(3), B(3), C, D, E, F, H, I and proteolipid K(x).

It is found in the cell membrane. Its function is as follows. Component of the A-type ATP synthase that produces ATP from ADP in the presence of a proton gradient across the membrane. In Methanosphaera stadtmanae (strain ATCC 43021 / DSM 3091 / JCM 11832 / MCB-3), this protein is A-type ATP synthase subunit F.